A 68-amino-acid polypeptide reads, in one-letter code: Coiled-coil domain-containing protein 179 (68 aa).

The disordered stretch occupies residues 11–68 (SQVNPEGPRQHHPSEVTERQLANKRIQNMQHLKKEKRRLNKRFSRPSPIPEPGLLWSS). The span at 18–28 (PRQHHPSEVTE) shows a compositional bias: basic and acidic residues. Residues 27–53 (TERQLANKRIQNMQHLKKEKRRLNKRF) adopt a coiled-coil conformation. Over residues 41 to 54 (HLKKEKRRLNKRFS) the composition is skewed to basic residues.

The chain is Coiled-coil domain-containing protein 179 (CCDC179) from Homo sapiens (Human).